A 369-amino-acid polypeptide reads, in one-letter code: Glycolate oxidase (369 aa).

M1 is subject to N-acetylmethionine. One can recognise an FMN hydroxy acid dehydrogenase domain in the interval 1 to 359; that stretch reads MEITNVNEYE…SRSHIAADWD (359 aa). Y24 lines the glyoxylate pocket. FMN contacts are provided by residues 77 to 79, S106, 127 to 129, and T155; these read PTA and QLY. Y129 lines the glyoxylate pocket. R164 provides a ligand contact to glyoxylate. K230 and S252 together coordinate FMN. The glyoxylate site is built by H254 and R257. The Proton acceptor role is filled by H254. FMN contacts are provided by residues 285–289 and 308–309; these read DGGVR and GR. Positions 367–369 match the Microbody targeting signal motif; the sequence is ARL.

This sequence belongs to the FMN-dependent alpha-hydroxy acid dehydrogenase family. In terms of assembly, homotetramer. Requires FMN as cofactor.

The protein localises to the peroxisome. It carries out the reaction glycolate + O2 = glyoxylate + H2O2. The enzyme catalyses a (2S)-2-hydroxycarboxylate + O2 = a 2-oxocarboxylate + H2O2. Its pathway is photosynthesis; photorespiration; glycine from 2-phosphoglycolate: step 2/3. Catalyzes the oxidation of glycolate to glyoxylate, with a reduction of O2 to H2O2. Is a key enzyme in photorespiration in green plants. To a lesser extent, is also able to use L-lactate and 2-hydroxbyutanoate as substrate in vitro, but shows almost no activity with L-mandelate. This chain is Glycolate oxidase, found in Spinacia oleracea (Spinach).